The primary structure comprises 250 residues: MEANDQTQNIPAISFRSVRKSYKQDGQTYDVLQDVTGDIQQGAIVAVLGPSGSGKSTLLSMCNLMRTPDSGEVNIYGKEVREWNVNELRRTAALAFQSAPVLDGTVRDNLSLVQRLHQSQLYSPEKLASLAGLPPELLDRSARDLSGGQRQRLSLARTLSNPSSILLLDEITSALDPVSALEIEELIKRQHQEKKWTVMWVTHNMEQAKRIADTIWFMADGRLLEIAETDTFFSAPQHEAAKEFLKGGTR.

Residues 13–245 (ISFRSVRKSY…PQHEAAKEFL (233 aa)) form the ABC transporter domain. 49 to 56 (GPSGSGKS) lines the ATP pocket.

Belongs to the ABC transporter superfamily.

The chain is Putative ABC transporter ATP-binding protein YjkB (yjkB) from Bacillus subtilis (strain 168).